The sequence spans 207 residues: Guanylate kinase (207 aa).

Residues 5-184 (GNLFIVSAPS…ALADLRAIIR (180 aa)) enclose the Guanylate kinase-like domain. 12–19 (APSGAGKS) serves as a coordination point for ATP.

The protein belongs to the guanylate kinase family.

The protein resides in the cytoplasm. The catalysed reaction is GMP + ATP = GDP + ADP. In terms of biological role, essential for recycling GMP and indirectly, cGMP. In Shewanella oneidensis (strain ATCC 700550 / JCM 31522 / CIP 106686 / LMG 19005 / NCIMB 14063 / MR-1), this protein is Guanylate kinase.